We begin with the raw amino-acid sequence, 429 residues long: Violacein synthase (429 aa).

3–21 (RAIIVGGGLAGGLTAIYLA) contacts FAD.

The cofactor is FAD.

The catalysed reaction is protoviolaceinate + NADPH + O2 + H(+) = violaceinate + NADP(+) + H2O. It catalyses the reaction protoviolaceinate + NADH + O2 + H(+) = violaceinate + NAD(+) + H2O. It carries out the reaction protodeoxyviolaceinate + NADPH + O2 + H(+) = deoxyviolaceinate + NADP(+) + H2O. The enzyme catalyses protodeoxyviolaceinate + NADH + O2 + H(+) = deoxyviolaceinate + NAD(+) + H2O. The protein operates within pigment biosynthesis; violacein biosynthesis. Functionally, catalyzes the hydroxylation of the 16-position of protoviolaceinate and protodeoxyviolaceinate to form violacein and deoxyviolacein, respectively. The polypeptide is Violacein synthase (vioC) (Chromobacterium violaceum (strain ATCC 12472 / DSM 30191 / JCM 1249 / CCUG 213 / NBRC 12614 / NCIMB 9131 / NCTC 9757 / MK)).